The sequence spans 178 residues: Gamma-crystallin S (178 aa).

The residue at position 2 (S2) is an N-acetylserine. Residues 2–5 form an N-terminal arm region; it reads SKSG. Beta/gamma crystallin 'Greek key' domains follow at residues 6–44 and 45–87; these read TKITFYEDKHFQGRHYDCDCDCADFHMYLSRCNSIRVEG and GTWA…RAVH. A connecting peptide region spans residues 88-93; that stretch reads LSSGGQ. Beta/gamma crystallin 'Greek key' domains follow at residues 94–134 and 135–177; these read YKIQ…KVLD and GVWI…RRIV.

Belongs to the beta/gamma-crystallin family. In terms of assembly, monomer.

Functionally, crystallins are the dominant structural components of the vertebrate eye lens. The chain is Gamma-crystallin S (CRYGS) from Canis lupus familiaris (Dog).